Reading from the N-terminus, the 356-residue chain is uncharacterized protein (356 aa).

37–44 (TGASSGIG) serves as a coordination point for NADP(+). S168 serves as a coordination point for substrate. The active-site Proton acceptor is Y181.

The protein belongs to the short-chain dehydrogenases/reductases (SDR) family.

This is an uncharacterized protein from Bacillus subtilis (strain 168).